We begin with the raw amino-acid sequence, 138 residues long: Ribonuclease kappa-A (138 aa).

A signal peptide spans 1–24 (MVLYFSPVLTFFLANFFNSKSTTT). Topologically, residues 25-75 (ENLQVFLVENQHRDSKRKINPTFSKKGIEVRQQNENLWSKIVALRFDYSVW) are extracellular. A helical transmembrane segment spans residues 76–96 (GIIQLVLMMGLFFYINSVALI). The Cytoplasmic segment spans residues 97 to 138 (EDLPIDEEFNSVEEFYTAATSAYNQNAYTVGLPVHLCAYASI).

The protein belongs to the RNase K family.

The protein localises to the membrane. Its function is as follows. Endoribonuclease. This Ceratitis capitata (Mediterranean fruit fly) protein is Ribonuclease kappa-A.